Here is a 481-residue protein sequence, read N- to C-terminus: MITIEQVLEVLKKDHNFRDIINQEYYYYSWTGVTFDHLSYDSRDITPSTLFFAKGAGFKLEFLESAVQAGLGFYVAEKDYQVGIPAILVSDIKQAMSLVAQAFYQHPQDKLKLLAFTGTKGKTTASYFAFNILKQSHKPAMLSTMNTTLDGKTFFKSNLTTPESLDLFRMMAEAVSNGMTHLIMEVSSQAYLTKRVYGLTFDVGVFLNISPDHIGPIEHPTFEDYFYHKRLLLKNSQAVIVNSGMNHFDFVAEEVADKDHDFYGKDSENTVKHSSGFSFKAKGKLAGDYDIQLIGDFNQDNAMAAGLACLRLGASLEDIKKGIAQTSVPGRMEILTQANGAKVFVDYAHNGDSLDKLLQVVTDHQKGKISLILGAPGNKGESRRQDFGHVLNTYPEINVILSTDDPNKEDPLTICQEIASHINRKVRIIIDREEAIKTAMSETTGSSDALVIAGKGADAFQIVNGKRTDYAGDIEVAKKYL.

Ser-42 provides a ligand contact to UDP-N-acetyl-alpha-D-muramoyl-L-alanyl-D-glutamate. Residue 118–124 coordinates ATP; it reads GTKGKTT. Residues Asn-158, 160-161, Ser-187, and Arg-195 each bind UDP-N-acetyl-alpha-D-muramoyl-L-alanyl-D-glutamate; that span reads TT. Position 229 is an N6-carboxylysine (Lys-229). The L-lysine recognition motif motif lies at 404–407; the sequence is DDPN.

This sequence belongs to the MurCDEF family. MurE subfamily. In terms of processing, carboxylation is probably crucial for Mg(2+) binding and, consequently, for the gamma-phosphate positioning of ATP.

It localises to the cytoplasm. The catalysed reaction is UDP-N-acetyl-alpha-D-muramoyl-L-alanyl-D-glutamate + L-lysine + ATP = UDP-N-acetyl-alpha-D-muramoyl-L-alanyl-gamma-D-glutamyl-L-lysine + ADP + phosphate + H(+). It functions in the pathway cell wall biogenesis; peptidoglycan biosynthesis. Functionally, catalyzes the addition of L-lysine to the nucleotide precursor UDP-N-acetylmuramoyl-L-alanyl-D-glutamate (UMAG) in the biosynthesis of bacterial cell-wall peptidoglycan. This is UDP-N-acetylmuramoyl-L-alanyl-D-glutamate--L-lysine ligase from Streptococcus thermophilus (strain ATCC BAA-491 / LMD-9).